The sequence spans 435 residues: Plant UBX domain-containing protein 6 (435 aa).

Disordered regions lie at residues 1 to 150 (MDVN…PQKV), 208 to 265 (ENYT…EDQP), and 311 to 352 (PTTT…SMSS). Residues 49–62 (TSSFSTFDGSSGYS) show a composition bias toward low complexity. Over residues 112 to 129 (AVEHYGGEENRAIERPEQ) the composition is skewed to basic and acidic residues. Residues 130 to 141 (SSRSMSEETVSS) show a composition bias toward low complexity. Residues 150-211 (VFTHTVTSWS…IISREEENYT (62 aa)) form the SEP 1 domain. Polar residues predominate over residues 211 to 222 (TESQAGSDSAST). A compositionally biased stretch (basic and acidic residues) spans 231–242 (RAKESAIERSEQ). Residues 252 to 265 (DSAELQEQQQEDQP) show a composition bias toward acidic residues. Positions 268–343 (VVTYTVTIWR…ESTSTEPPLT (76 aa)) constitute an SEP 2 domain. Composition is skewed to low complexity over residues 312-323 (TTTRSTSCSSQT) and 333-349 (SEST…QPPS). The UBX domain maps to 357–434 (PAAPTTSIQL…GIANSVLVQK (78 aa)).

The polypeptide is Plant UBX domain-containing protein 6 (Arabidopsis thaliana (Mouse-ear cress)).